Here is a 233-residue protein sequence, read N- to C-terminus: Outer membrane protein MIP (233 aa).

A signal peptide spans 1–20; sequence MKMKLVTAAVMGLAMSTAMA. The PPIase FKBP-type domain occupies 144 to 233; sequence SDTVTVEYTG…IHLISVKKSS (90 aa).

This sequence belongs to the FKBP-type PPIase family.

The protein resides in the cell outer membrane. The enzyme catalyses [protein]-peptidylproline (omega=180) = [protein]-peptidylproline (omega=0). Strongly inhibited by FK506 but is completely resistant to cyclosporin A. Essential virulence factor associated with macrophage infectivity. Exhibits PPIase activity. The protein is Outer membrane protein MIP (mip) of Legionella pneumophila subsp. pneumophila (strain Philadelphia 1 / ATCC 33152 / DSM 7513).